The following is a 417-amino-acid chain: Actin-related protein 10 (417 aa).

Belongs to the actin family. In terms of assembly, subunit of dynactin, a multiprotein complex part of a tripartite complex with dynein and a adapter, such as BICDL1, BICD2 or HOOK3. The dynactin complex is built around ACTR1A/ACTB filament and consists of an actin-related filament composed of a shoulder domain, a pointed end and a barbed end. Its length is defined by its flexible shoulder domain. The soulder is composed of 2 DCTN1 subunits, 4 DCTN2 and 2 DCTN3. The 4 DCNT2 (via N-terminus) bind the ACTR1A filament and act as molecular rulers to determine the length. The pointed end is important for binding dynein-dynactin cargo adapters. Consists of 4 subunits: ACTR10, DCNT4, DCTN5 and DCTN6. The barbed end is composed of a CAPZA1:CAPZB heterodimers, which binds ACTR1A/ACTB filament and dynactin and stabilizes dynactin.

It localises to the cytoplasm. It is found in the cytoskeleton. In terms of biological role, part of the dynactin complex that activates the molecular motor dynein for ultra-processive transport along microtubules. The protein is Actin-related protein 10 (Actr10) of Mus musculus (Mouse).